A 1412-amino-acid chain; its full sequence is Protein MODIFIER OF SNC1 1 (1412 aa).

Disordered stretches follow at residues 1–276 (MTSS…QSYP), 384–437 (GYGS…TQRP), 472–798 (QQMQ…KQKQ), 827–888 (NEGV…DESI), 909–1144 (DIKV…WNDG), and 1156–1412 (AEEM…GDRN). A compositionally biased stretch (polar residues) spans 56 to 103 (SWGSKSSLNAWGTSSLSPRTESGPGSPSHLSNRPSSGGSVTRPSTADS). Phosphoserine is present on Ser-72. Low complexity predominate over residues 109–119 (SSSSVAWDSNS). The segment covering 120–135 (RPSSASGVFPSNQPSV) has biased composition (polar residues). 2 stretches are compositionally biased toward basic and acidic residues: residues 197–207 (AEKDTSEKSTR) and 236–267 (ANDR…EGQL). The segment covering 478 to 488 (RNERREIRNDA) has biased composition (basic and acidic residues). 4 stretches are compositionally biased toward polar residues: residues 517–531 (KTRT…SSVV), 539–553 (QPRT…NKVS), 565–581 (SKNS…TNKN), and 610–639 (RIVN…TNTE). Residues 665–713 (DPKDNQRSTMRELARQRAQQRQKEEEERARDQRAKALAKLEELNRRSQI) show a composition bias toward basic and acidic residues. A coiled-coil region spans residues 667 to 717 (KDNQRSTMRELARQRAQQRQKEEEERARDQRAKALAKLEELNRRSQIYEEG). Polar residues-rich tracts occupy residues 738 to 749 (GSHSSNATNSVE), 756 to 779 (KNTT…QQDN), and 829 to 847 (GVSS…SAES). The segment covering 850-862 (PKRKNNRNGKKKH) has biased composition (basic residues). Residues 877–888 (VGKETKSGDESI) show a composition bias toward basic and acidic residues. Ser-883 carries the phosphoserine modification. 2 stretches are compositionally biased toward polar residues: residues 914-938 (GDSS…NWKS) and 983-1003 (QTTV…QTSS). A compositionally biased stretch (basic and acidic residues) spans 1006-1023 (KRVEIERYVPKPIVKEMA). A compositionally biased stretch (polar residues) spans 1056 to 1070 (LQPSGSTAGKSGSPS). Residues 1071 to 1084 (KSRHGNGRQGKHGR) show a composition bias toward basic residues. Residues 1106–1137 (FVTSNQPIRGTVNYHSSKQTEQIAAKDQTTCN) show a composition bias toward polar residues. 3 stretches are compositionally biased toward basic and acidic residues: residues 1191-1202 (DPKKGNKRDFNK), 1222-1232 (KEGRVPGDHVW), and 1242-1251 (GGRESTRDKP). 2 stretches are compositionally biased toward polar residues: residues 1266–1286 (GFTT…QNRS) and 1293–1307 (VEQN…NTGQ). Basic and acidic residues-rich tracts occupy residues 1338–1351 (SNRD…HYEY) and 1359–1369 (YDGERSREQSK). Over residues 1384–1397 (QGQQRQGGYQQQRG) the composition is skewed to low complexity. Over residues 1400 to 1412 (GRNGGHGFTGDRN) the composition is skewed to gly residues.

As to quaternary structure, interacts with TCP14 and TCP15.

Its function is as follows. Involved in the regulation of the chromatin structure and DNA methylation at the SNC1 locus. Regulates the expression of SNC1 at chromatin level. This chain is Protein MODIFIER OF SNC1 1 (MOS1), found in Arabidopsis thaliana (Mouse-ear cress).